A 239-amino-acid chain; its full sequence is Ribonuclease PH (239 aa).

Phosphate-binding positions include R87 and 125 to 127; that span reads GTR.

It belongs to the RNase PH family. As to quaternary structure, homohexameric ring arranged as a trimer of dimers.

It carries out the reaction tRNA(n+1) + phosphate = tRNA(n) + a ribonucleoside 5'-diphosphate. Its function is as follows. Phosphorolytic 3'-5' exoribonuclease that plays an important role in tRNA 3'-end maturation. Removes nucleotide residues following the 3'-CCA terminus of tRNAs; can also add nucleotides to the ends of RNA molecules by using nucleoside diphosphates as substrates, but this may not be physiologically important. Probably plays a role in initiation of 16S rRNA degradation (leading to ribosome degradation) during starvation. In Azotobacter vinelandii (strain DJ / ATCC BAA-1303), this protein is Ribonuclease PH.